The following is a 381-amino-acid chain: uncharacterized protein (381 aa).

A compositionally biased stretch (polar residues) spans 331–340; sequence MQNGYANNGR. The disordered stretch occupies residues 331-381; it reads MQNGYANNGRNHQRERFERPEKNSKKNKFLPFNGSNKEKKRDKLKKNCVIM. Residues 342–354 show a composition bias toward basic and acidic residues; the sequence is HQRERFERPEKNS. Residues 372–381 show a composition bias toward basic residues; sequence DKLKKNCVIM.

Its subcellular location is the cytoplasm. It localises to the nucleus. This is an uncharacterized protein from Saccharomyces cerevisiae (strain ATCC 204508 / S288c) (Baker's yeast).